A 393-amino-acid polypeptide reads, in one-letter code: NAD(P)H-quinone oxidoreductase subunit H, chloroplastic (393 aa).

The protein belongs to the complex I 49 kDa subunit family. As to quaternary structure, NDH is composed of at least 16 different subunits, 5 of which are encoded in the nucleus.

It is found in the plastid. Its subcellular location is the chloroplast thylakoid membrane. The catalysed reaction is a plastoquinone + NADH + (n+1) H(+)(in) = a plastoquinol + NAD(+) + n H(+)(out). It carries out the reaction a plastoquinone + NADPH + (n+1) H(+)(in) = a plastoquinol + NADP(+) + n H(+)(out). NDH shuttles electrons from NAD(P)H:plastoquinone, via FMN and iron-sulfur (Fe-S) centers, to quinones in the photosynthetic chain and possibly in a chloroplast respiratory chain. The immediate electron acceptor for the enzyme in this species is believed to be plastoquinone. Couples the redox reaction to proton translocation, and thus conserves the redox energy in a proton gradient. The protein is NAD(P)H-quinone oxidoreductase subunit H, chloroplastic of Vitis vinifera (Grape).